A 523-amino-acid chain; its full sequence is Sensory neuron membrane protein 1 (523 aa).

The Cytoplasmic portion of the chain corresponds to 1 to 11 (MQLPRELKYAA). Residues 12 to 32 (IAGGVALFGLIFGWVLFPTIL) traverse the membrane as a helical segment. Residues 33–458 (KSQLKKEMAL…HQLFIPKRVV (426 aa)) lie on the Extracellular side of the membrane. Asparagine 67 and asparagine 229 each carry an N-linked (GlcNAc...) asparagine glycan. Cystine bridges form between cysteine 268–cysteine 333, cysteine 297–cysteine 352, and cysteine 335–cysteine 341. Asparagine 440 carries an N-linked (GlcNAc...) asparagine glycan. A helical transmembrane segment spans residues 459 to 479 (GVLRWWMVSFGSLGAVIGIVF). At 480-523 (HFRDHIMRLAVSGDTKVSKVTPEEEEQKDISVIGQAQEPAKVNI) the chain is on the cytoplasmic side.

The protein belongs to the CD36 family.

Its subcellular location is the cell membrane. Functionally, plays an olfactory role that is not restricted to pheromone sensitivity. The protein is Sensory neuron membrane protein 1 of Helicoverpa armigera (Cotton bollworm).